We begin with the raw amino-acid sequence, 227 residues long: Exodeoxyribonuclease (227 aa).

It catalyses the reaction Exonucleolytic cleavage in the 3'- to 5'-direction to yield nucleoside 5'-phosphates.. 3'-5' exonuclease that preferentially uses ssDNA as substrate. Plays a role in group I intron homing. May play a role in the final step of host DNA degradation, by scavenging DNA into mononucleotides. This Escherichia coli (Bacteriophage T4) protein is Exodeoxyribonuclease (dexA).